Consider the following 385-residue polypeptide: Mannitol-1-phosphate 5-dehydrogenase (385 aa).

An NAD(+)-binding site is contributed by 3-14; that stretch reads ALQFGAGNIGRG.

It belongs to the mannitol dehydrogenase family.

The enzyme catalyses D-mannitol 1-phosphate + NAD(+) = beta-D-fructose 6-phosphate + NADH + H(+). The sequence is that of Mannitol-1-phosphate 5-dehydrogenase from Buchnera aphidicola subsp. Acyrthosiphon pisum (strain 5A).